The chain runs to 445 residues: TNF receptor-associated factor family protein DDB_G0290971 (445 aa).

Residues 23-67 form an RING-type; degenerate zinc finger; that stretch reads CPICFDLYYSSSSKKEVFQCRDGHLACKSCWSDSLLNKKECMICR. TRAF-type zinc fingers lie at residues 133–186 and 186–242; these read KHQV…QLDA and AHAL…ESID. The stretch at 269–307 forms a coiled coil; that stretch reads QLELVECKNQIYQINNKYEKLLERVIKLEQLSMDASNKL. One can recognise an MATH domain in the interval 314 to 441; that stretch reads KNSIIFATFS…EDKLVIGLRI (128 aa).

The protein belongs to the TNF receptor-associated factor family. A subfamily.

It is found in the cytoplasm. Probable adapter protein and signal transducer that links members of the tumor necrosis factor receptor family to different signaling pathways by association with the receptor cytoplasmic domain and kinases. The polypeptide is TNF receptor-associated factor family protein DDB_G0290971 (Dictyostelium discoideum (Social amoeba)).